A 143-amino-acid polypeptide reads, in one-letter code: Nucleoside diphosphate kinase (143 aa).

Residues Lys11, Phe59, Arg87, Thr93, Arg104, and Asn114 each contribute to the ATP site. The Pros-phosphohistidine intermediate role is filled by His117.

Belongs to the NDK family. As to quaternary structure, homotetramer. Mg(2+) is required as a cofactor.

It is found in the cytoplasm. The enzyme catalyses a 2'-deoxyribonucleoside 5'-diphosphate + ATP = a 2'-deoxyribonucleoside 5'-triphosphate + ADP. The catalysed reaction is a ribonucleoside 5'-diphosphate + ATP = a ribonucleoside 5'-triphosphate + ADP. Its function is as follows. Major role in the synthesis of nucleoside triphosphates other than ATP. The ATP gamma phosphate is transferred to the NDP beta phosphate via a ping-pong mechanism, using a phosphorylated active-site intermediate. The sequence is that of Nucleoside diphosphate kinase from Shewanella sp. (strain ANA-3).